Consider the following 269-residue polypeptide: Hydroxyethylthiazole kinase (269 aa).

Residue Met46 participates in substrate binding. 2 residues coordinate ATP: Arg122 and Thr168. A substrate-binding site is contributed by Gly195.

Belongs to the Thz kinase family. Mg(2+) is required as a cofactor.

It carries out the reaction 5-(2-hydroxyethyl)-4-methylthiazole + ATP = 4-methyl-5-(2-phosphooxyethyl)-thiazole + ADP + H(+). Its pathway is cofactor biosynthesis; thiamine diphosphate biosynthesis; 4-methyl-5-(2-phosphoethyl)-thiazole from 5-(2-hydroxyethyl)-4-methylthiazole: step 1/1. Catalyzes the phosphorylation of the hydroxyl group of 4-methyl-5-beta-hydroxyethylthiazole (THZ). The chain is Hydroxyethylthiazole kinase from Chloroflexus aurantiacus (strain ATCC 29366 / DSM 635 / J-10-fl).